We begin with the raw amino-acid sequence, 251 residues long: MKIGKVERYIHEKLEKKRLHFVLIDPDDTSPEVAGKLARVCEELEIDAIMVGGSTGAEGETLDEVVKAIKENYSLPVILFPGSHGGISKYADAIFFMSLLNSRNPFFITGAQALGAFRVKKYNLEPIPMAYIIVEPGETAGWVGDAKPIPRHKPKIAAAYALAGQYLGMRLVYLEAGSGAPQPVPETMVATVKKAIDVPLIVGGGIRSGEQVRKLVKAGADIIVTGTAIESAGSIEEARKKLEDLRRGVSI.

Aspartate 25 and serine 54 together coordinate Mg(2+). Residues 173 to 179 (YLEAGSG), 204 to 205 (GG), and 226 to 227 (GT) contribute to the sn-glycerol 1-phosphate site.

This sequence belongs to the GGGP/HepGP synthase family. Group II subfamily. The cofactor is Mg(2+).

The protein localises to the cytoplasm. The catalysed reaction is sn-glycerol 1-phosphate + (2E,6E,10E)-geranylgeranyl diphosphate = sn-3-O-(geranylgeranyl)glycerol 1-phosphate + diphosphate. Its pathway is membrane lipid metabolism; glycerophospholipid metabolism. Prenyltransferase that catalyzes the transfer of the geranylgeranyl moiety of geranylgeranyl diphosphate (GGPP) to the C3 hydroxyl of sn-glycerol-1-phosphate (G1P). This reaction is the first ether-bond-formation step in the biosynthesis of archaeal membrane lipids. This Pyrococcus furiosus (strain ATCC 43587 / DSM 3638 / JCM 8422 / Vc1) protein is Geranylgeranylglyceryl phosphate synthase.